A 151-amino-acid chain; its full sequence is UPF0178 protein ESA_02916 (151 aa).

Belongs to the UPF0178 family.

The polypeptide is UPF0178 protein ESA_02916 (Cronobacter sakazakii (strain ATCC BAA-894) (Enterobacter sakazakii)).